The sequence spans 649 residues: Endoplasmic reticulum chaperone BiP (649 aa).

The first 20 residues, 1 to 20 (MGLSTYVGTFLLCILTLSHC), serve as a signal peptide directing secretion. ATP is bound by residues 36 to 39 (GTTY), lysine 96, 226 to 228 (GGT), 292 to 299 (EKAKRTLS), and 363 to 366 (GSTR). Residues 125–279 (KPYMKVQVGS…KKKEGKDITK (155 aa)) are nucleotide-binding (NBD). The interval 399–499 (VQAGVISGVE…PRGLPQIEVT (101 aa)) is substrate-binding (SBD). The short motif at 646-649 (KEEL) is the Prevents secretion from ER element.

It belongs to the heat shock protein 70 family.

It is found in the endoplasmic reticulum lumen. It carries out the reaction ATP + H2O = ADP + phosphate + H(+). Its activity is regulated as follows. The chaperone activity is regulated by ATP-induced allosteric coupling of the nucleotide-binding (NBD) and substrate-binding (SBD) domains. In the ADP-bound and nucleotide-free (apo) states, the two domains have little interaction. In contrast, in the ATP-bound state the two domains are tightly coupled, which results in drastically accelerated kinetics in both binding and release of polypeptide substrates. J domain-containing co-chaperones stimulate the ATPase activity and are required for efficient substrate recognition. Functionally, endoplasmic reticulum chaperone that plays a key role in protein folding and quality control in the endoplasmic reticulum lumen. Involved in the correct folding of proteins and degradation of misfolded proteins. Acts as a key repressor of the unfolded protein response (UPR). The polypeptide is Endoplasmic reticulum chaperone BiP (Echinococcus multilocularis (Fox tapeworm)).